Here is a 73-residue protein sequence, read N- to C-terminus: uncharacterized protein (73 aa).

Helical transmembrane passes span 4–24 and 51–71; these read LIPVALLTALLAGCAHDSPCV and AGAIAGGAAAVAGLTMGIIAL.

It is found in the cell membrane. This is an uncharacterized protein from Escherichia coli O157:H7.